The chain runs to 197 residues: uncharacterized protein (197 aa).

The tract at residues 1-135 (MKTPWKFLAR…ERGKRANARV (135 aa)) is disordered. Residues 14–32 (RQPSGKTQESSAGNDTGSK) are compositionally biased toward polar residues. Basic and acidic residues predominate over residues 83–96 (IHADEAQTTARDEA). The span at 116–132 (SQRKPRIKRRERGKRAN) shows a compositional bias: basic residues.

To Rhizobium NGR234A y4nF and y4aO.

This is an uncharacterized protein from Rhizobium meliloti (strain 1021) (Ensifer meliloti).